The chain runs to 625 residues: Enolase 4 (625 aa).

The segment at 184-226 (YSTVPTPLPPVPPPPPPPPPTKKKGQKPGRKDTITEKPIAPAE) is disordered. Over residues 189 to 203 (TPLPPVPPPPPPPPP) the composition is skewed to pro residues. Val-300 is a binding site for substrate. Residues 331-350 (PSPPKAETKKGHDGSKRGQQ) form a disordered region. Positions 336-346 (AETKKGHDGSK) are enriched in basic and acidic residues. Asn-497 serves as the catalytic Proton acceptor. Gly-548 is a substrate binding site. The tract at residues 604–625 (PLVPTFPTQGVEESAETGASSG) is disordered.

Belongs to the enolase family. Interacts with ENO1 and AKAP4. In terms of processing, synthesized as an approximately 70-kDa precursor, which then undergoes proteolytic cleavage to an approximately 60-kDa enzyme; HOATZ associates directly or indirectly with ENO4 to mediate this process before its transport to mature flagella.

It carries out the reaction (2R)-2-phosphoglycerate = phosphoenolpyruvate + H2O. It functions in the pathway carbohydrate degradation; glycolysis; pyruvate from D-glyceraldehyde 3-phosphate: step 4/5. Its function is as follows. May be required for sperm motility and function. The protein is Enolase 4 of Homo sapiens (Human).